A 396-amino-acid polypeptide reads, in one-letter code: ATP-dependent RNA helicase eIF4A (396 aa).

The Q motif signature appears at Tyr-22–Gln-50. Positions Ile-53–Ile-223 constitute a Helicase ATP-binding domain. Residue Ala-66–Thr-73 coordinates ATP. The DEAD box motif lies at Asp-171–Asp-174. The Helicase C-terminal domain occupies Gly-234–Phe-395.

This sequence belongs to the DEAD box helicase family. eIF4A subfamily. In terms of assembly, component of the eIF4F complex, which composition varies with external and internal environmental conditions. It is composed of at least eIF4A, eIF4E and eIF4G.

The protein resides in the cytoplasm. It carries out the reaction ATP + H2O = ADP + phosphate + H(+). In terms of biological role, ATP-dependent RNA helicase which is a subunit of the eIF4F complex involved in cap recognition and is required for mRNA binding to ribosome. In the current model of translation initiation, eIF4A unwinds RNA secondary structures in the 5'-UTR of mRNAs which is necessary to allow efficient binding of the small ribosomal subunit, and subsequent scanning for the initiator codon. In Kluyveromyces lactis (strain ATCC 8585 / CBS 2359 / DSM 70799 / NBRC 1267 / NRRL Y-1140 / WM37) (Yeast), this protein is ATP-dependent RNA helicase eIF4A (TIF1).